The sequence spans 342 residues: GTPase Obg (342 aa).

Residues 1–159 (MQFIDQAQIE…KLLRLELKLL (159 aa)) enclose the Obg domain. In terms of domain architecture, OBG-type G spans 160 to 330 (AEVGIIGLPN…MLQEVWGILD (171 aa)). GTP-binding positions include 166–173 (GLPNAGKS), 191–195 (FTTLI), 213–216 (DIPG), 280–283 (NKID), and 311–313 (SAV). Mg(2+) contacts are provided by Ser173 and Thr193.

The protein belongs to the TRAFAC class OBG-HflX-like GTPase superfamily. OBG GTPase family. Monomer. It depends on Mg(2+) as a cofactor.

The protein localises to the cytoplasm. Functionally, an essential GTPase which binds GTP, GDP and possibly (p)ppGpp with moderate affinity, with high nucleotide exchange rates and a fairly low GTP hydrolysis rate. Plays a role in control of the cell cycle, stress response, ribosome biogenesis and in those bacteria that undergo differentiation, in morphogenesis control. In Nostoc sp. (strain PCC 7120 / SAG 25.82 / UTEX 2576), this protein is GTPase Obg.